The primary structure comprises 20 residues: LECNKLVDIAYITCPAGKNL.

Monomer. Homodimerizes during storage at 30 degrees Celsius (observed after 3 days). Expressed by the venom gland.

It is found in the secreted. The protein localises to the target cell membrane. Functionally, this three-finger cytotoxin shows cytotoxicity and direct nephrotoxicity. The cytotoxicity has been observed on B16F10 melanoma cells (EC(50)=2.56 uM) and on kidney proximal tubular epithelium LLCPK1 cells (EC(50)=4.79 uM); it is due to necrotic cell death and not to apoptosis. Direct nephrotoxicity has been deduced from binding to LLCPK1 cell line and to kidney membranes. In addition, after intravenous injection into mice tail vein, the toxin principally accumulates in kidney, but only minimally in blood, liver and brain. This Daboia russelii (Russel's viper) protein is 7.2 kDa cytotoxin RVV-7.